The sequence spans 297 residues: Mitochondrial glycine transporter (297 aa).

3 Solcar repeats span residues Thr-5–Ala-81, Leu-105–Thr-189, and Thr-211–His-295. 6 helical membrane-spanning segments follow: residues Leu-8–Gln-33, Gly-56–Leu-82, Leu-111–Glu-136, Gly-164–Lys-187, Ile-215–Met-241, and Gly-270–Ile-288.

It belongs to the mitochondrial carrier (TC 2.A.29) family. SLC25A38 subfamily.

It is found in the mitochondrion inner membrane. It carries out the reaction glycine(in) = glycine(out). Functionally, mitochondrial glycine transporter that imports glycine into the mitochondrial matrix. Plays an important role in providing glycine for the first enzymatic step in heme biosynthesis, the condensation of glycine with succinyl-CoA to produce 5-aminolevulinate (ALA) in the mitochondrial matrix. The sequence is that of Mitochondrial glycine transporter from Candida glabrata (strain ATCC 2001 / BCRC 20586 / JCM 3761 / NBRC 0622 / NRRL Y-65 / CBS 138) (Yeast).